A 477-amino-acid chain; its full sequence is Pyruvate kinase (477 aa).

Residue Arg-34 coordinates substrate. 3 residues coordinate K(+): Asn-36, Asp-64, and Thr-65. Asn-36–His-39 is an ATP binding site. Residues Arg-71 and Lys-150 each contribute to the ATP site. Glu-216 contributes to the Mg(2+) binding site. Positions 239, 240, and 272 each coordinate substrate. Residue Asp-240 participates in Mg(2+) binding.

It belongs to the pyruvate kinase family. As to quaternary structure, homotetramer. It depends on Mg(2+) as a cofactor. Requires K(+) as cofactor.

It catalyses the reaction pyruvate + ATP = phosphoenolpyruvate + ADP + H(+). The protein operates within carbohydrate degradation; glycolysis; pyruvate from D-glyceraldehyde 3-phosphate: step 5/5. This Borreliella burgdorferi (strain ATCC 35210 / DSM 4680 / CIP 102532 / B31) (Borrelia burgdorferi) protein is Pyruvate kinase (pyk).